The sequence spans 2148 residues: Polyketide synthase 1 (2148 aa).

Residues 19–261 form an N-terminal acylcarrier protein transacylase domain (SAT) region; that stretch reads FIFGDQSSCN…TPLAVHAPYH (243 aa). The 436-residue stretch at 394-829 folds into the Ketosynthase family 3 (KS3) domain; it reads ESKIAIIGMS…GGNTALLVED (436 aa). Residues cysteine 566, histidine 701, and histidine 745 each act as for beta-ketoacyl synthase activity in the active site. The interval 930-1236 is malonyl-CoA:ACP transacylase (MAT) domain; sequence FVFSGQGSQY…MRNKDGWQVL (307 aa). Serine 1018 functions as the For acyl/malonyl transferase activity in the catalytic mechanism. The segment at 1310–1624 is product template (PT) domain; that stretch reads TASVHRMVHE…RKVLNTAMPP (315 aa). The tract at residues 1314–1447 is N-terminal hotdog fold; the sequence is HRMVHESVEK…SSLHFEQPKV (134 aa). The region spanning 1314–1619 is the PKS/mFAS DH domain; it reads HRMVHESVEK…FQGIPRKVLN (306 aa). The active-site Proton acceptor; for dehydratase activity is histidine 1346. The segment at 1474-1619 is C-terminal hotdog fold; it reads LNSRMSSGVI…FQGIPRKVLN (146 aa). The Proton donor; for dehydratase activity role is filled by aspartate 1533. The disordered stretch occupies residues 1619–1655; that stretch reads NTAMPPPKSQNEAPVRSGPAKPAAKPPRSASSEHSGH. Low complexity predominate over residues 1634 to 1650; that stretch reads RSGPAKPAAKPPRSASS. The region spanning 1678–1752 is the Carrier 1 domain; the sequence is RNPMLPVFKI…DLAAQLGLDT (75 aa). Position 1712 is an O-(pantetheine 4'-phosphoryl)serine (serine 1712). The segment covering 1755–1790 has biased composition (low complexity); it reads SDQSSGQSSSSGGLSPRSDSIGEITSSVTTPPSLSP. The disordered stretch occupies residues 1755 to 1796; sequence SDQSSGQSSSSGGLSPRSDSIGEITSSVTTPPSLSPRGSVSG. The 78-residue stretch at 1793–1870 folds into the Carrier 2 domain; that stretch reads SVSGSQCKDV…SFKHMFQQGH (78 aa). At serine 1830 the chain carries O-(pantetheine 4'-phosphoryl)serine. Residues 1882–2146 form a thioesterase (TE) domain region; sequence LKQYRATSTL…ERVAAFIRST (265 aa). The active-site For thioesterase activity is the serine 1973.

Its pathway is pigment biosynthesis. In terms of biological role, polyketide synthase; part of the Pks1 gene cluster that mediates the biosynthesis of an anthraquinone derivative pigment that contributes to conidial pigmentation that provides protection from UV radiation, heat and cold stress. The polyketide synthase Pks1 produces 1-acetyl-2,4,6,8-tetrahydroxy-9,10-anthraquinone though condensation of acetyl-CoA with malonyl-CoA. The dehydratase EthD and the laccase Mlac1 further convert the anthraquinone derivative into the final conidial pigment. This Metarhizium robertsii (strain ARSEF 23 / ATCC MYA-3075) (Metarhizium anisopliae (strain ARSEF 23)) protein is Polyketide synthase 1.